A 481-amino-acid polypeptide reads, in one-letter code: Cobyric acid synthase (481 aa).

Residues 244-431 (VLRVVIPVLP…LHGLFDAPEA (188 aa)) form the GATase cobBQ-type domain. The active-site Nucleophile is the C325. The active site involves H423.

Belongs to the CobB/CobQ family. CobQ subfamily.

It participates in cofactor biosynthesis; adenosylcobalamin biosynthesis. Catalyzes amidations at positions B, D, E, and G on adenosylcobyrinic A,C-diamide. NH(2) groups are provided by glutamine, and one molecule of ATP is hydrogenolyzed for each amidation. This is Cobyric acid synthase from Ralstonia nicotianae (strain ATCC BAA-1114 / GMI1000) (Ralstonia solanacearum).